A 173-amino-acid polypeptide reads, in one-letter code: MTYVMSLFLLGLVLGLVAVASNPSPYFGALSLVGVAAFGCGVLIWHGGSFLSLVLFLIYLGGMLVVFAYSAALAAEPYPETLGSWPVVSVYFGYFFFVFGILYTNMVLDEEVWWGVSGEMDWDAVFRGDMDGVSLMYSSGGGVLLLGAWVLLLTLLVVLELVRGLGRGALRAV.

Helical transmembrane passes span 1-21, 25-45, 53-73, 82-102, and 142-162; these read MTYV…AVAS, PYFG…VLIW, LVLF…SAAL, LGSW…FGIL, and GVLL…LELV.

This sequence belongs to the complex I subunit 6 family.

The protein localises to the mitochondrion membrane. It catalyses the reaction a ubiquinone + NADH + 5 H(+)(in) = a ubiquinol + NAD(+) + 4 H(+)(out). Its function is as follows. Core subunit of the mitochondrial membrane respiratory chain NADH dehydrogenase (Complex I) that is believed to belong to the minimal assembly required for catalysis. Complex I functions in the transfer of electrons from NADH to the respiratory chain. The immediate electron acceptor for the enzyme is believed to be ubiquinone. This is NADH-ubiquinone oxidoreductase chain 6 (MT-ND6) from Tetraodon nigroviridis (Spotted green pufferfish).